The sequence spans 155 residues: Small ribosomal subunit protein uS7 (155 aa).

This sequence belongs to the universal ribosomal protein uS7 family. As to quaternary structure, part of the 30S ribosomal subunit. Contacts proteins S9 and S11.

Functionally, one of the primary rRNA binding proteins, it binds directly to 16S rRNA where it nucleates assembly of the head domain of the 30S subunit. Is located at the subunit interface close to the decoding center, probably blocks exit of the E-site tRNA. This Chlorobium phaeobacteroides (strain DSM 266 / SMG 266 / 2430) protein is Small ribosomal subunit protein uS7.